The following is a 130-amino-acid chain: Small ribosomal subunit protein uS9 (130 aa).

It belongs to the universal ribosomal protein uS9 family.

The protein is Small ribosomal subunit protein uS9 of Halorhodospira halophila (strain DSM 244 / SL1) (Ectothiorhodospira halophila (strain DSM 244 / SL1)).